A 131-amino-acid chain; its full sequence is Large ribosomal subunit protein bL19 (131 aa).

The protein belongs to the bacterial ribosomal protein bL19 family.

Its function is as follows. This protein is located at the 30S-50S ribosomal subunit interface and may play a role in the structure and function of the aminoacyl-tRNA binding site. In Polynucleobacter necessarius subsp. necessarius (strain STIR1), this protein is Large ribosomal subunit protein bL19.